We begin with the raw amino-acid sequence, 512 residues long: Protein disulfide-isomerase (512 aa).

Positions 1–24 are cleaved as a signal peptide; it reads MAKNVAIFGLLFSLLLLVPSQIFA. A Thioredoxin 1 domain is found at 25-144; the sequence is EESSTDAKEF…IVEYLKKQSG (120 aa). Catalysis depends on nucleophile residues cysteine 62 and cysteine 65. The cysteines at positions 62 and 65 are disulfide-linked. An N-linked (GlcNAc...) asparagine glycan is attached at asparagine 278. A Thioredoxin 2 domain is found at 357–485; the sequence is YKDGKVEPFV…IIEFIEKNKD (129 aa). Active-site nucleophile residues include cysteine 407 and cysteine 410. Cysteines 407 and 410 form a disulfide. Basic and acidic residues predominate over residues 487–496; that stretch reads TGAAHQEVEQ. The interval 487–512 is disordered; sequence TGAAHQEVEQPKAAAQPEAEQPKDEL. The short motif at 509 to 512 is the Prevents secretion from ER element; that stretch reads KDEL.

It belongs to the protein disulfide isomerase family.

Its subcellular location is the endoplasmic reticulum lumen. The enzyme catalyses Catalyzes the rearrangement of -S-S- bonds in proteins.. Participates in the folding of proteins containing disulfide bonds, may be involved in glycosylation, prolyl hydroxylation and triglyceride transfer. This chain is Protein disulfide-isomerase (PDI), found in Medicago sativa (Alfalfa).